The chain runs to 93 residues: Protein ea8.5 (93 aa).

The protein is Protein ea8.5 (ea8.5) of Escherichia phage lambda (Bacteriophage lambda).